Reading from the N-terminus, the 315-residue chain is Acetaldehyde dehydrogenase (315 aa).

Ser-13–Ile-16 contacts NAD(+). The Acyl-thioester intermediate role is filled by Cys-131. NAD(+)-binding positions include Ser-163 to Asn-171 and Asn-290.

The protein belongs to the acetaldehyde dehydrogenase family.

The catalysed reaction is acetaldehyde + NAD(+) + CoA = acetyl-CoA + NADH + H(+). The polypeptide is Acetaldehyde dehydrogenase (Xanthobacter autotrophicus (strain ATCC BAA-1158 / Py2)).